The following is a 288-amino-acid chain: Energy-coupling factor transporter ATP-binding protein EcfA2 (288 aa).

The ABC transporter domain maps to 3-245 (IIVKNLTHIY…NASKLKDIGL (243 aa)). 40-47 (GHTGSGKS) contributes to the ATP binding site.

Belongs to the ABC transporter superfamily. Energy-coupling factor EcfA family. As to quaternary structure, forms a stable energy-coupling factor (ECF) transporter complex composed of 2 membrane-embedded substrate-binding proteins (S component), 2 ATP-binding proteins (A component) and 2 transmembrane proteins (T component).

The protein localises to the cell membrane. Its function is as follows. ATP-binding (A) component of a common energy-coupling factor (ECF) ABC-transporter complex. Unlike classic ABC transporters this ECF transporter provides the energy necessary to transport a number of different substrates. This Clostridioides difficile (strain 630) (Peptoclostridium difficile) protein is Energy-coupling factor transporter ATP-binding protein EcfA2.